The chain runs to 510 residues: MVLLAAAVCTKAGKAIVSRQFVEMTRTRIEGLLAAFPKLMNTGKQHTFVETESVRYVYQPMEKLYMVLITTKNSNILEDLETLRLFSRVIPEYCRALEENEISEHCFDLIFAFDEIVALGYRENVNLAQIRTFTEMDSHEEKVFRAVRETQEREAKAEMRRKAKELQQARRDAERLGKKAPGFGGFGSSAVSGGTTAAMITETIIETEKPKVAPAPSRPSGPSKALKLGAKGKEVDNFVDKLKSEGENIMTSVGKRSTEAAKVLAPPINMESVHMKIEEKISLTCGRDGGLQNMELHGMIMLHISDEKFARIRLHVENEDKRGVQLQTHPNVDKKLFTAESQIGLKNPEKSFPINSDVGVLKWRLQTTEESFIPLTINCWPSESGNSCDVNIEYELQEESLELNDVVIMIPLPSGVGAPVIGEIDGEYRHDSRRNLLEWCLPVIDAKNKSGSLEFSIAGQPNDFFPVQVSFISKKNYCNIQVTKVTQVDGNSPVRFSTETTFLVDKYEIL.

The 241-residue stretch at 270-510 (MESVHMKIEE…TFLVDKYEIL (241 aa)) folds into the MHD domain.

Belongs to the adaptor complexes medium subunit family. Delta-COP subfamily. In terms of assembly, oligomeric complex that consists of at least the alpha, beta, beta', gamma, delta, epsilon and zeta subunits.

The protein localises to the cytoplasm. The protein resides in the golgi apparatus membrane. It is found in the cytoplasmic vesicle. Its subcellular location is the COPI-coated vesicle membrane. In terms of biological role, the coatomer is a cytosolic protein complex that binds to dilysine motifs and reversibly associates with Golgi non-clathrin-coated vesicles, which further mediate biosynthetic protein transport from the ER, via the Golgi up to the trans Golgi network. Coatomer complex is required for budding from Golgi membranes, and is essential for the retrograde Golgi-to-ER transport of dilysine-tagged proteins. In mammals, the coatomer can only be recruited by membranes associated to ADP-ribosylation factors (ARFs), which are small GTP-binding proteins; the complex also influences the Golgi structural integrity, as well as the processing, activity, and endocytic recycling of LDL receptors. The chain is Coatomer subunit delta (ARCN1) from Gallus gallus (Chicken).